Here is a 37-residue protein sequence, read N- to C-terminus: Large ribosomal subunit protein bL36 (37 aa).

Belongs to the bacterial ribosomal protein bL36 family.

The protein is Large ribosomal subunit protein bL36 of Maridesulfovibrio salexigens (strain ATCC 14822 / DSM 2638 / NCIMB 8403 / VKM B-1763) (Desulfovibrio salexigens).